Here is a 215-residue protein sequence, read N- to C-terminus: MKYQLTAMEARVIGCLLEKQVTTPEQYPLSVNGVVTACNQKTNREPVMNLSESEVQEQLDNLVKRHYLRTVSGFGNRVTKYEQRFCNSEFGDLKLSAAEVALITTLLLRGAQTPGELRSRAARMYEFSDMAEVESTLEQLASREDGPFVVRLAREPGKRESRYMHLFSGEVENPPAVTDMSNAADGDLQARVEALEIEVAELKQRLDSLLAHLGD.

N6-acetyllysine is present on K80.

This sequence belongs to the UPF0502 family.

The chain is UPF0502 protein YceH from Escherichia coli O127:H6 (strain E2348/69 / EPEC).